The sequence spans 401 residues: Imidazolonepropionase (401 aa).

Residues His66 and His68 each coordinate Fe(3+). Zn(2+) is bound by residues His66 and His68. Residues Arg75, Tyr138, and His171 each contribute to the 4-imidazolone-5-propanoate site. Position 138 (Tyr138) interacts with N-formimidoyl-L-glutamate. His236 contacts Fe(3+). His236 contacts Zn(2+). Gln239 lines the 4-imidazolone-5-propanoate pocket. Asp311 serves as a coordination point for Fe(3+). Asp311 lines the Zn(2+) pocket. N-formimidoyl-L-glutamate-binding residues include Asn313 and Gly315. Residue Thr316 participates in 4-imidazolone-5-propanoate binding.

The protein belongs to the metallo-dependent hydrolases superfamily. HutI family. Zn(2+) serves as cofactor. It depends on Fe(3+) as a cofactor.

Its subcellular location is the cytoplasm. It catalyses the reaction 4-imidazolone-5-propanoate + H2O = N-formimidoyl-L-glutamate. The protein operates within amino-acid degradation; L-histidine degradation into L-glutamate; N-formimidoyl-L-glutamate from L-histidine: step 3/3. Catalyzes the hydrolytic cleavage of the carbon-nitrogen bond in imidazolone-5-propanoate to yield N-formimidoyl-L-glutamate. It is the third step in the universal histidine degradation pathway. This Acinetobacter baumannii (strain ATCC 17978 / DSM 105126 / CIP 53.77 / LMG 1025 / NCDC KC755 / 5377) protein is Imidazolonepropionase.